The sequence spans 319 residues: tRNA uridine(34) hydroxylase (319 aa).

Residues 127 to 221 (KQEDTVIIDA…YGKDPEVQGE (95 aa)) enclose the Rhodanese domain. The Cysteine persulfide intermediate role is filled by C181.

It belongs to the TrhO family.

It carries out the reaction uridine(34) in tRNA + AH2 + O2 = 5-hydroxyuridine(34) in tRNA + A + H2O. Functionally, catalyzes oxygen-dependent 5-hydroxyuridine (ho5U) modification at position 34 in tRNAs. This chain is tRNA uridine(34) hydroxylase, found in Bacillus cereus (strain AH187).